Here is a 1491-residue protein sequence, read N- to C-terminus: Membrane-associated guanylate kinase, WW and PDZ domain-containing protein 1 (1491 aa).

Positions 17-105 (ECTVKRGPQG…AVTFKAVRQG (89 aa)) constitute a PDZ 1 domain. A Guanylate kinase-like domain is found at 96 to 287 (AVTFKAVRQG…APITDPSQKF (192 aa)). 103-110 (RQGGRLNK) contacts ATP. The segment at 236 to 267 (AENEEEDDVPEMNSSFTADSGEQEEHTLQETA) is disordered. Positions 300 to 333 (GPLPENWEMAYTENGEVYFIDHNTKTTSWLDPRC) constitute a WW 1 domain. The residue at position 357 (Ser357) is a Phosphoserine. A WW 2 domain is found at 359 to 392 (LELPAGWEKIEDPVYGIYYVDHINRKTQYENPVL). Residues 411 to 421 (QQQQQQQQQQQ) show a composition bias toward low complexity. The interval 411–462 (QQQQQQQQQQQTEEWTEDHSALVPPVIPNHPPSNPEPAREVPLQGKPFFTRN) is disordered. Over residues 435–445 (PVIPNHPPSNP) the composition is skewed to pro residues. Residues 472–554 (HTKLRKSSRG…GASVDLELCR (83 aa)) enclose the PDZ 2 domain. Residues 586–600 (QETYDSPASHSSKTG) show a composition bias toward polar residues. Disordered regions lie at residues 586–623 (QETY…SSHG), 720–832 (QRGG…FGEC), and 932–987 (TENE…GGGS). The PDZ 3 domain maps to 643–721 (TVHIVKGPMG…GSEVTLLVQR (79 aa)). Phosphoserine is present on residues Ser730 and Ser741. Residues 742–752 (QNSSQHSVSSH) are compositionally biased toward low complexity. A compositionally biased stretch (polar residues) spans 756-766 (HTASPSHSTQV). Residue Ser800 is modified to Phosphoserine. Residues 813-895 (SGLSKGERER…DELICVDGTP (83 aa)) enclose the PDZ 4 domain. Residues 939–951 (PASSHHSSNQPAS) show a composition bias toward polar residues. One can recognise a PDZ 5 domain in the interval 970-1066 (SSGSGSTSGI…DRILAVNGCS (97 aa)). The tract at residues 970–1066 (SSGSGSTSGI…DRILAVNGCS (97 aa)) is interaction with FCHSD2. Positions 975–987 (STSGIGSGGGGGS) are enriched in gly residues. A Phosphoserine modification is found at Ser1071. The segment covering 1112 to 1130 (TTTHTPSQQGTQETRNTTK) has biased composition (polar residues). Disordered regions lie at residues 1112–1143 (TTTH…KAPQ) and 1234–1491 (DGSV…DLSI). One can recognise a PDZ 6 domain in the interval 1124–1206 (ETRNTTKPKQ…DEILEINGET (83 aa)). Basic and acidic residues-rich tracts occupy residues 1278–1338 (DLHK…DAQA), 1354–1396 (KRRE…DGSP), and 1403–1491 (LERL…DLSI). Phosphoserine is present on residues Ser1361 and Ser1412.

Part of a complex composed of AMOTL2, MAGI1 and CDH5, within the complex AMOTL2 acts as a scaffold protein for the interaction of MAGI1 with CDH5. The complex is required for coupling actin fibers to cell junctions in endothelial cells. Interacts through its WW 2 domain with SYNPO and through its PDZ 5 domain with ACTN4. Interacts with cytoplasmic domain of ADGRB1. Interacts via its WW domains with DRPLA. Interacts with ESAM, LRP2 and CXADR. May interact with CTNNB1. Interacts through its PDZ 1 domain with NET1. Interacts with ASIC3 and AMOT. Interacts with FCHSD2. Interacts with IGSF5/JAM4 and through its PDZ 2 and 3 domains with NPHS1 forming a tripartite complex. Interacts with DDN. Interacts with DLL1. Interacts with KCNJ10 and possibly with KCNJ10/KCNJ16 heterodimer; this interaction may facilitate KCNJ10/KCNJ16 potassium channel expression at the basolateral membrane in kidney tubular cells. Interacts with PRRG4 (via cytoplasmic domain). In terms of assembly, interacts (via PDZ domain) with RAPGEF2. As to expression, widely expressed with the exception of skeletal muscle. Isoform 1, isoform 2 and isoform 6 are highly expressed in colon, kidney, lung, liver, and pancreas. Isoform 5 is predominantly expressed in brain and heart. Isoform 3 and isoform 4 are highly expressed in pancreas and brain.

Its subcellular location is the cell junction. It is found in the tight junction. The protein localises to the cell membrane. In terms of biological role, plays a role in coupling actin fibers to cell junctions in endothelial cells, via its interaction with AMOTL2 and CDH5. May regulate acid-induced ASIC3 currents by modulating its expression at the cell surface. This Homo sapiens (Human) protein is Membrane-associated guanylate kinase, WW and PDZ domain-containing protein 1 (MAGI1).